A 294-amino-acid polypeptide reads, in one-letter code: 33 kDa chaperonin (294 aa).

2 disulfide bridges follow: cysteine 239–cysteine 241 and cysteine 272–cysteine 275.

Belongs to the HSP33 family. Post-translationally, under oxidizing conditions two disulfide bonds are formed involving the reactive cysteines. Under reducing conditions zinc is bound to the reactive cysteines and the protein is inactive.

The protein resides in the cytoplasm. In terms of biological role, redox regulated molecular chaperone. Protects both thermally unfolding and oxidatively damaged proteins from irreversible aggregation. Plays an important role in the bacterial defense system toward oxidative stress. The chain is 33 kDa chaperonin from Lacticaseibacillus paracasei (strain ATCC 334 / BCRC 17002 / CCUG 31169 / CIP 107868 / KCTC 3260 / NRRL B-441) (Lactobacillus paracasei).